Reading from the N-terminus, the 300-residue chain is Homoserine kinase (300 aa).

82-92 contributes to the ATP binding site; the sequence is RPGSGLGSSAA.

Belongs to the GHMP kinase family. Homoserine kinase subfamily.

The protein resides in the cytoplasm. The catalysed reaction is L-homoserine + ATP = O-phospho-L-homoserine + ADP + H(+). The protein operates within amino-acid biosynthesis; L-threonine biosynthesis; L-threonine from L-aspartate: step 4/5. Its function is as follows. Catalyzes the ATP-dependent phosphorylation of L-homoserine to L-homoserine phosphate. This is Homoserine kinase from Methanocella arvoryzae (strain DSM 22066 / NBRC 105507 / MRE50).